We begin with the raw amino-acid sequence, 446 residues long: Argininosuccinate synthase (446 aa).

ATP-binding positions include alanine 17–serine 25 and alanine 43. Tyrosine 99 contacts L-citrulline. Residues glycine 129 and threonine 131 each coordinate ATP. L-aspartate-binding residues include threonine 131, asparagine 135, and aspartate 136. Residue asparagine 135 participates in L-citrulline binding. An ATP-binding site is contributed by aspartate 136. Residues arginine 139 and serine 192 each contribute to the L-citrulline site. Residue aspartate 194 coordinates ATP. Residues threonine 201, glutamate 203, and glutamate 280 each contribute to the L-citrulline site.

Belongs to the argininosuccinate synthase family. Type 2 subfamily. In terms of assembly, homotetramer.

It is found in the cytoplasm. It catalyses the reaction L-citrulline + L-aspartate + ATP = 2-(N(omega)-L-arginino)succinate + AMP + diphosphate + H(+). It functions in the pathway amino-acid biosynthesis; L-arginine biosynthesis; L-arginine from L-ornithine and carbamoyl phosphate: step 2/3. In Burkholderia mallei (strain NCTC 10247), this protein is Argininosuccinate synthase.